The following is a 376-amino-acid chain: Chaperone protein DnaJ (376 aa).

In terms of domain architecture, J spans 5 to 70 (DYYEVLGVAK…QKRAAYDQYG (66 aa)). A CR-type zinc finger spans residues 136–214 (GYDTQIRVPS…CHGSGKVKET (79 aa)). 8 residues coordinate Zn(2+): Cys149, Cys152, Cys166, Cys169, Cys188, Cys191, Cys202, and Cys205. CXXCXGXG motif repeat units lie at residues 149 to 156 (CEVCHGSG), 166 to 173 (CPTCHGQG), 188 to 195 (CPKCHGTG), and 202 to 209 (CAHCHGSG).

It belongs to the DnaJ family. Homodimer. It depends on Zn(2+) as a cofactor.

The protein resides in the cytoplasm. Its function is as follows. Participates actively in the response to hyperosmotic and heat shock by preventing the aggregation of stress-denatured proteins and by disaggregating proteins, also in an autonomous, DnaK-independent fashion. Unfolded proteins bind initially to DnaJ; upon interaction with the DnaJ-bound protein, DnaK hydrolyzes its bound ATP, resulting in the formation of a stable complex. GrpE releases ADP from DnaK; ATP binding to DnaK triggers the release of the substrate protein, thus completing the reaction cycle. Several rounds of ATP-dependent interactions between DnaJ, DnaK and GrpE are required for fully efficient folding. Also involved, together with DnaK and GrpE, in the DNA replication of plasmids through activation of initiation proteins. This chain is Chaperone protein DnaJ, found in Burkholderia multivorans (strain ATCC 17616 / 249).